Consider the following 214-residue polypeptide: Probable nicotinate-nucleotide adenylyltransferase (214 aa).

It belongs to the NadD family.

The catalysed reaction is nicotinate beta-D-ribonucleotide + ATP + H(+) = deamido-NAD(+) + diphosphate. It functions in the pathway cofactor biosynthesis; NAD(+) biosynthesis; deamido-NAD(+) from nicotinate D-ribonucleotide: step 1/1. Catalyzes the reversible adenylation of nicotinate mononucleotide (NaMN) to nicotinic acid adenine dinucleotide (NaAD). In Mycolicibacterium vanbaalenii (strain DSM 7251 / JCM 13017 / BCRC 16820 / KCTC 9966 / NRRL B-24157 / PYR-1) (Mycobacterium vanbaalenii), this protein is Probable nicotinate-nucleotide adenylyltransferase.